Here is a 337-residue protein sequence, read N- to C-terminus: Putative carboxypeptidase TP_0688 (337 aa).

Ser118 serves as the catalytic Nucleophile. Active-site charge relay system residues include Glu234 and His302.

Belongs to the peptidase S66 family.

This Treponema pallidum (strain Nichols) protein is Putative carboxypeptidase TP_0688.